The following is a 141-amino-acid chain: Large ribosomal subunit protein uL11 (141 aa).

Belongs to the universal ribosomal protein uL11 family. In terms of assembly, part of the ribosomal stalk of the 50S ribosomal subunit. Interacts with L10 and the large rRNA to form the base of the stalk. L10 forms an elongated spine to which L12 dimers bind in a sequential fashion forming a multimeric L10(L12)X complex. One or more lysine residues are methylated.

In terms of biological role, forms part of the ribosomal stalk which helps the ribosome interact with GTP-bound translation factors. This Thermotoga sp. (strain RQ2) protein is Large ribosomal subunit protein uL11.